Consider the following 496-residue polypeptide: Aspartic proteinase (496 aa).

Positions 1 to 24 are cleaved as a signal peptide; that stretch reads MAKRHLLLVTTCLWALSCALLLHA. The propeptide at 25–59 is activation peptide; it reads SSDGFLRVNLNKKRLDKEDLTAAKLAQQGNRLLKT. A Peptidase A1 domain is found at 77-493; sequence YYGVIGLGSP…DFGKDRIGFA (417 aa). Asp-95 is an active-site residue. Cystine bridges form between Cys-108/Cys-114 and Cys-273/Cys-277. Asp-282 is an active-site residue. Residues 307 to 407 enclose the Saposin B-type domain; it reads IISTECKEVV…NQLCERLPSP (101 aa). 4 disulfide bridges follow: Cys-312–Cys-401, Cys-337–Cys-373, Cys-343–Cys-370, and Cys-415–Cys-452. An N-linked (GlcNAc...) asparagine glycan is attached at Asn-387.

It belongs to the peptidase A1 family.

The protein localises to the vacuole. Its function is as follows. Involved in the breakdown of propeptides of storage proteins in protein-storage vacuoles. This is Aspartic proteinase (RAP) from Oryza sativa subsp. japonica (Rice).